The primary structure comprises 740 residues: Glycerol dehydrogenase large subunit (740 aa).

A signal peptide spans methionine 1–alanine 29. Disordered stretches follow at residues proline 28–valine 105 and leucine 442–valine 468. Residues glutamate 34–glycine 43 show a composition bias toward low complexity. The segment covering serine 46–tyrosine 58 has biased composition (polar residues).

Belongs to the bacterial PQQ dehydrogenase family. It depends on pyrroloquinoline quinone as a cofactor.

The protein localises to the secreted. It carries out the reaction glycerol + A = dihydroxyacetone + AH2. In terms of biological role, catalyzes the oxidation of glycerol to glycerone. Also acts, more slowly, on a number of other polyols including D-sorbitol, D-arabinitol, D-mannitol, meso-erythritol, adonitol and propylene glycol. The sequence is that of Glycerol dehydrogenase large subunit (sldA) from Gluconobacter thailandicus.